A 147-amino-acid polypeptide reads, in one-letter code: Hemoglobin subunit gamma (147 aa).

The region spanning 3–147 (NFTAEDKAAI…VASALASRYH (145 aa)) is the Globin domain. His-64 and His-93 together coordinate heme b.

The protein belongs to the globin family. In terms of assembly, heterotetramer of two alpha chains and two gamma chains in fetal hemoglobin (Hb F). In terms of tissue distribution, red blood cells.

Its function is as follows. Gamma chains make up the fetal hemoglobin F, in combination with alpha chains. The protein is Hemoglobin subunit gamma (HBG) of Alouatta belzebul (Red-handed howler monkey).